We begin with the raw amino-acid sequence, 236 residues long: 2,3,4,5-tetrahydropyridine-2,6-dicarboxylate N-acetyltransferase (236 aa).

The protein belongs to the transferase hexapeptide repeat family. DapH subfamily.

It carries out the reaction (S)-2,3,4,5-tetrahydrodipicolinate + acetyl-CoA + H2O = L-2-acetamido-6-oxoheptanedioate + CoA. It participates in amino-acid biosynthesis; L-lysine biosynthesis via DAP pathway; LL-2,6-diaminopimelate from (S)-tetrahydrodipicolinate (acetylase route): step 1/3. Catalyzes the transfer of an acetyl group from acetyl-CoA to tetrahydrodipicolinate. The chain is 2,3,4,5-tetrahydropyridine-2,6-dicarboxylate N-acetyltransferase from Bacillus velezensis (strain DSM 23117 / BGSC 10A6 / LMG 26770 / FZB42) (Bacillus amyloliquefaciens subsp. plantarum).